A 446-amino-acid polypeptide reads, in one-letter code: N-succinylarginine dihydrolase (446 aa).

Residues Ala19–Ser28, Asn110, and His137–Arg138 each bind substrate. Residue Glu174 is part of the active site. Residue Arg213 participates in substrate binding. Residue His249 is part of the active site. The substrate site is built by Asp251 and Asn364. Residue Cys370 is the Nucleophile of the active site.

It belongs to the succinylarginine dihydrolase family. Homodimer.

The catalysed reaction is N(2)-succinyl-L-arginine + 2 H2O + 2 H(+) = N(2)-succinyl-L-ornithine + 2 NH4(+) + CO2. Its pathway is amino-acid degradation; L-arginine degradation via AST pathway; L-glutamate and succinate from L-arginine: step 2/5. Catalyzes the hydrolysis of N(2)-succinylarginine into N(2)-succinylornithine, ammonia and CO(2). The protein is N-succinylarginine dihydrolase of Burkholderia ambifaria (strain MC40-6).